Consider the following 157-residue polypeptide: MEKSFTHIEAGRARMVDISEKNDVSRLARAAGEIVLSAETLEKIRTGTVEKGNVFATARVAAVLAVKKTPETIPMCHQIPITGIDVDFEIGEEAVSAVVEVRTVGKTGVEMEALTGVSSALLTVWDMVKSAEKDEIGNYPHTLIRNIRVLEKLKGKA.

Substrate-binding positions include 75–77 and 111–112; these read MCH and ME. Residue Asp126 is part of the active site.

It belongs to the MoaC family. In terms of assembly, homohexamer; trimer of dimers.

The catalysed reaction is (8S)-3',8-cyclo-7,8-dihydroguanosine 5'-triphosphate = cyclic pyranopterin phosphate + diphosphate. The protein operates within cofactor biosynthesis; molybdopterin biosynthesis. Catalyzes the conversion of (8S)-3',8-cyclo-7,8-dihydroguanosine 5'-triphosphate to cyclic pyranopterin monophosphate (cPMP). In Methanosarcina mazei (strain ATCC BAA-159 / DSM 3647 / Goe1 / Go1 / JCM 11833 / OCM 88) (Methanosarcina frisia), this protein is Probable cyclic pyranopterin monophosphate synthase.